A 121-amino-acid chain; its full sequence is Ribonuclease P protein component (121 aa).

This sequence belongs to the RnpA family. In terms of assembly, consists of a catalytic RNA component (M1 or rnpB) and a protein subunit.

The enzyme catalyses Endonucleolytic cleavage of RNA, removing 5'-extranucleotides from tRNA precursor.. Functionally, RNaseP catalyzes the removal of the 5'-leader sequence from pre-tRNA to produce the mature 5'-terminus. It can also cleave other RNA substrates such as 4.5S RNA. The protein component plays an auxiliary but essential role in vivo by binding to the 5'-leader sequence and broadening the substrate specificity of the ribozyme. The chain is Ribonuclease P protein component from Nitrosomonas eutropha (strain DSM 101675 / C91 / Nm57).